The following is a 217-amino-acid chain: 3,4-dihydroxy-2-butanone 4-phosphate synthase (217 aa).

D-ribulose 5-phosphate contacts are provided by residues R37–E38, D42, R150–T154, and E174. E38 provides a ligand contact to Mg(2+). H153 is a binding site for Mg(2+).

Belongs to the DHBP synthase family. As to quaternary structure, homodimer. Mg(2+) is required as a cofactor. Mn(2+) serves as cofactor.

It catalyses the reaction D-ribulose 5-phosphate = (2S)-2-hydroxy-3-oxobutyl phosphate + formate + H(+). The protein operates within cofactor biosynthesis; riboflavin biosynthesis; 2-hydroxy-3-oxobutyl phosphate from D-ribulose 5-phosphate: step 1/1. Catalyzes the conversion of D-ribulose 5-phosphate to formate and 3,4-dihydroxy-2-butanone 4-phosphate. The sequence is that of 3,4-dihydroxy-2-butanone 4-phosphate synthase from Escherichia coli O17:K52:H18 (strain UMN026 / ExPEC).